Consider the following 484-residue polypeptide: Monocarboxylate transporter 2 (484 aa).

Residues 1 to 16 (MPSEPSAPLPQPLPPD) lie on the Cytoplasmic side of the membrane. Residues 17-37 (GGWGWVVVCASFISIGFSYAF) form a helical membrane-spanning segment. The Extracellular segment spans residues 38 to 60 (PKAVTVFFKDIQEIFNTTSSQIA). The helical transmembrane segment at 61–81 (WISSIMLAVMYAGGPISSVLV) threads the bilayer. Topologically, residues 82–90 (NNYGSRPVV) are cytoplasmic. The helical transmembrane segment at 91 to 111 (IVGGLLCCIGMILASYSNSVI) threads the bilayer. Over 112–116 (ELYLT) the chain is Extracellular. Residues 117–137 (VGFIGGLGLAFNLQPALTIIG) traverse the membrane as a helical segment. Over 138-149 (KYFYRRRPLANG) the chain is Cytoplasmic. A helical transmembrane segment spans residues 150-170 (CAMAGSPVFLSTLAPFNQYLF). Residues 171–174 (NNYG) lie on the Extracellular side of the membrane. Residues 175 to 195 (WKGSFLILGGIFLHSCVAGCL) traverse the membrane as a helical segment. The Cytoplasmic segment spans residues 196 to 245 (MRPVGPSPNTKKSKSKVGSRHDSTLKKASKVSTAQKVNRFLDFSLFMHRG). The helical transmembrane segment at 246–266 (FLIYLSGNVILFLGIFAPIIF) threads the bilayer. Residues 267–281 (LAQYAKHIGVDDYNS) lie on the Extracellular side of the membrane. A helical membrane pass occupies residues 282–302 (AFLLSVMAFIDMFARPSVGLI). Residues 303–311 (ANTSLIRPR) lie on the Cytoplasmic side of the membrane. Residues 312-332 (IQYLFSSAIIFTGICHLLCPL) traverse the membrane as a helical segment. At 333 to 337 (ATTYS) the chain is on the extracellular side. Residues 338–358 (ALVVYVVFFGLGFGSISSLLF) form a helical membrane-spanning segment. Residues 359–372 (ECLMDIVGATRFSS) lie on the Cytoplasmic side of the membrane. A helical transmembrane segment spans residues 373 to 393 (AVGLTTIVECCPVLFGPPLAG). The Extracellular segment spans residues 394-405 (KLLDITGEYKYL). A helical membrane pass occupies residues 406 to 426 (YIASGTVVLVSGTYLLIGNAI). Topologically, residues 427–484 (NYRLLDKERKREKAKKKKSASHASREMEALNRSKQDEVTVKASNAHNPPSDRDKESNI) are cytoplasmic. Residues 438 to 484 (EKAKKKKSASHASREMEALNRSKQDEVTVKASNAHNPPSDRDKESNI) form a disordered region. Composition is skewed to basic and acidic residues over residues 449 to 465 (ASREMEALNRSKQDEVT) and 475 to 484 (PSDRDKESNI).

Belongs to the major facilitator superfamily. Monocarboxylate porter (TC 2.A.1.13) family. Homodimer. Interacts with GRID2IP. Interacts with EMB; interaction mediates SLC16A7 targeting to the plasma membrane. Interacts with isoform 2 of BSG. As to expression, detected in testis and in spermatozoa (at protein level).

It localises to the cell membrane. The protein localises to the cytoplasm. It is found in the basolateral cell membrane. The enzyme catalyses (S)-lactate(in) + H(+)(in) = (S)-lactate(out) + H(+)(out). The catalysed reaction is 3-methyl-2-oxobutanoate(out) + H(+)(out) = 3-methyl-2-oxobutanoate(in) + H(+)(in). It carries out the reaction acetoacetate(out) + H(+)(out) = acetoacetate(in) + H(+)(in). It catalyses the reaction (R)-3-hydroxybutanoate(out) + H(+)(out) = (R)-3-hydroxybutanoate(in) + H(+)(in). The enzyme catalyses 4-methyl-2-oxopentanoate(out) + H(+)(out) = 4-methyl-2-oxopentanoate(in) + H(+)(in). The catalysed reaction is pyruvate(out) + H(+)(out) = pyruvate(in) + H(+)(in). It carries out the reaction (S)-3-hydroxybutanoate(out) + H(+)(out) = (S)-3-hydroxybutanoate(in) + H(+)(in). Transport activity exhibits steep dependence on substrate concentration. Substrate concentration sensitivity of SLC16A7 arises from the strong inter-subunit cooperativity of the SLC16A7 dimer during transport. Inhibited by AR-C155858. In terms of biological role, proton-coupled monocarboxylate symporter. Catalyzes the rapid transport across the plasma membrane of monocarboxylates such as L-lactate, pyruvate and ketone bodies, acetoacetate, beta-hydroxybutyrate and acetate. Dimerization is functionally required and both subunits work cooperatively in transporting substrate. This chain is Monocarboxylate transporter 2 (Slc16a7), found in Mus musculus (Mouse).